Here is a 649-residue protein sequence, read N- to C-terminus: Archaeal Lon protease (649 aa).

Over 1-114 (MFSIKFKTTE…KLDFKAPSST (114 aa)) the chain is Cytoplasmic. 47-54 (GDPGVGKS) is an ATP binding site. A helical transmembrane segment spans residues 115 to 135 (TLLLIMIGAILLSEYLLKYLP). Topologically, residues 136 to 138 (QNY) are extracellular. Residues 139 to 159 (LLAAVTITALIVLIFGFVIIL) traverse the membrane as a helical segment. Over 160-649 (TSIMGASRAS…DNRGGAERFN (490 aa)) the chain is Cytoplasmic. Residues 456–639 (EPKVGVIYGL…DEIVPLVFDL (184 aa)) form the Lon proteolytic domain. Active-site residues include serine 550 and lysine 593.

This sequence belongs to the peptidase S16 family. Archaeal LonB subfamily. In terms of assembly, homohexamer. Organized in a ring with a central cavity.

Its subcellular location is the cell membrane. ATP-dependent serine protease that mediates the selective degradation of mutant and abnormal proteins as well as certain short-lived regulatory proteins. Degrades polypeptides processively. The sequence is that of Archaeal Lon protease from Methanocaldococcus jannaschii (strain ATCC 43067 / DSM 2661 / JAL-1 / JCM 10045 / NBRC 100440) (Methanococcus jannaschii).